The sequence spans 150 residues: uncharacterized protein (150 aa).

A compositionally biased stretch (low complexity) spans Met1–Gly19. 2 disordered regions span residues Met1 to Thr21 and Glu85 to Glu131. A compositionally biased stretch (pro residues) spans Arg106 to Val115.

This is an uncharacterized protein from Schizosaccharomyces pombe (strain 972 / ATCC 24843) (Fission yeast).